The chain runs to 489 residues: IPT/TIG domain-containing protein BACOVA_02650 (489 aa).

Positions 1 to 27 (MKSIYKYLDTRLFLIGLLVLPFLAVVS) are cleaved as a signal peptide. The N-palmitoyl cysteine moiety is linked to residue Cys-28. Cys-28 is lipidated: S-diacylglycerol cysteine. IPT/TIG domains are found at residues 57–103 (VNPG…PNEL), 136–204 (PYIT…TAPA), and 232–304 (PVVT…AIGG).

The protein localises to the cell outer membrane. It participates in glucan metabolism; xyloglucan degradation. Polysaccharide-binding protein present at the surface of the cell. Probably mediates xyloglucan-binding before xyloglucan transport in the periplasm for degradation. The protein is IPT/TIG domain-containing protein BACOVA_02650 of Bacteroides ovatus (strain ATCC 8483 / DSM 1896 / JCM 5824 / BCRC 10623 / CCUG 4943 / NCTC 11153).